The following is a 366-amino-acid chain: Chorismate synthase (366 aa).

Arg-48 provides a ligand contact to NADP(+). FMN is bound by residues 125 to 127, 238 to 239, Gly-278, 293 to 297, and Arg-319; these read RSS, NA, and KPTSS.

It belongs to the chorismate synthase family. Homotetramer. It depends on FMNH2 as a cofactor.

It catalyses the reaction 5-O-(1-carboxyvinyl)-3-phosphoshikimate = chorismate + phosphate. It participates in metabolic intermediate biosynthesis; chorismate biosynthesis; chorismate from D-erythrose 4-phosphate and phosphoenolpyruvate: step 7/7. Catalyzes the anti-1,4-elimination of the C-3 phosphate and the C-6 proR hydrogen from 5-enolpyruvylshikimate-3-phosphate (EPSP) to yield chorismate, which is the branch point compound that serves as the starting substrate for the three terminal pathways of aromatic amino acid biosynthesis. This reaction introduces a second double bond into the aromatic ring system. The protein is Chorismate synthase of Hydrogenovibrio crunogenus (strain DSM 25203 / XCL-2) (Thiomicrospira crunogena).